The primary structure comprises 110 residues: Nucleoid-associated protein CbuK_1603 (110 aa).

It belongs to the YbaB/EbfC family. Homodimer.

The protein localises to the cytoplasm. It localises to the nucleoid. Binds to DNA and alters its conformation. May be involved in regulation of gene expression, nucleoid organization and DNA protection. The protein is Nucleoid-associated protein CbuK_1603 of Coxiella burnetii (strain CbuK_Q154) (Coxiella burnetii (strain Q154)).